Consider the following 372-residue polypeptide: Lysophosphatidic acid receptor 5 (372 aa).

The Extracellular portion of the chain corresponds to 1 to 26 (MLANSSSTNSSVLPCPDYRPTHRLHL). N4 and N9 each carry an N-linked (GlcNAc...) asparagine glycan. A helical membrane pass occupies residues 27–47 (VVYSLVLAAGLPLNALALWVF). The Cytoplasmic portion of the chain corresponds to 48–55 (LRALRVHS). A helical transmembrane segment spans residues 56–76 (VVSVYMCNLAASDLLFTLSLP). Topologically, residues 77 to 96 (VRLSYYALHHWPFPDLLCQT) are extracellular. An intrachain disulfide couples C94 to C175. A helical transmembrane segment spans residues 97 to 117 (TGAIFQMNMYGSCIFLMLINV). Over 118 to 136 (DRYAAIVHPLRLRHLRRPR) the chain is Cytoplasmic. The helical transmembrane segment at 137–157 (VARLLCLGVWALILVFAVPAA) threads the bilayer. Residues 158 to 187 (RVHRPSRCRYRDLEVRLCFESFSDELWKGR) are Extracellular-facing. A helical transmembrane segment spans residues 188–208 (LLPLVLLAEALGFLLPLAAVV). Over 209–239 (YSSGRVFWTLARPDATQSQRRRKTVRLLLAN) the chain is Cytoplasmic. A helical transmembrane segment spans residues 240–260 (LVIFLLCFVPYNSTLAVYGLL). Over 261–276 (RSKLVAASVPARDRVR) the chain is Extracellular. Residues 277–297 (GVLMVMVLLAGANCVLDPLVY) traverse the membrane as a helical segment. Topologically, residues 298 to 372 (YFSAEGFRNT…FTQCPQDSAL (75 aa)) are cytoplasmic. The disordered stretch occupies residues 312-372 (GTPHRARTSA…FTQCPQDSAL (61 aa)). Polar residues-rich tracts occupy residues 332-341 (SERSAVTTDA) and 357-372 (SHSLSSFTQCPQDSAL).

Belongs to the G-protein coupled receptor 1 family. In terms of tissue distribution, not expressed in frontal cortex, basal forebrain, caudate putamen, thalamus, or hippocampus.

It is found in the cell membrane. Functionally, receptor for lysophosphatidic acid (LPA), a mediator of diverse cellular activities. The sequence is that of Lysophosphatidic acid receptor 5 (LPAR5) from Homo sapiens (Human).